The chain runs to 321 residues: Zinc finger protein 524 (321 aa).

Polar residues-rich tracts occupy residues 1-14 (MDNP…STLS) and 39-48 (ATTSNRTLKS). Disordered stretches follow at residues 1-80 (MDNP…DLLL) and 86-105 (VPYT…SGSK). Positions 49–59 (SLPRKRGRPPR) form a DNA-binding region, a.T hook. 4 consecutive C2H2-type zinc fingers follow at residues 109–131 (HFCP…SISH), 137–159 (HVCK…CNIH), 165–187 (FRCV…HRIH), and 193–216 (YQCP…KRKH). Residues 248-321 (GVQEESPEGK…PGAIGHPPVD (74 aa)) form a disordered region. Over residues 262–271 (PISSTTSPLS) the composition is skewed to polar residues. Over residues 274–285 (TAGGSAGAGRGQ) the composition is skewed to gly residues.

This sequence belongs to the krueppel C2H2-type zinc-finger protein family.

It localises to the nucleus. In terms of biological role, may be involved in transcriptional regulation. The chain is Zinc finger protein 524 (Znf524) from Mus musculus (Mouse).